The chain runs to 59 residues: MGKITIVNIDDCVACGACSGTCPQSVLEVNDHVEIKNPDDCIGCGACVDACPQGVLKVE.

4Fe-4S ferredoxin-type domains are found at residues 2-30 and 31-59; these read GKIT…LEVN and DHVE…LKVE. [4Fe-4S] cluster contacts are provided by Cys12, Cys15, Cys18, Cys22, Cys41, Cys44, Cys47, and Cys51.

[4Fe-4S] cluster serves as cofactor.

Ferredoxins are iron-sulfur proteins that transfer electrons in a wide variety of metabolic reactions. The sequence is that of Ferredoxin from Entamoeba histolytica (strain ATCC 30459 / HM-1:IMSS / ABRM).